A 495-amino-acid chain; its full sequence is ATP synthase subunit beta, chloroplastic (495 aa).

Residue 172-179 (GGAGVGKT) coordinates ATP.

Belongs to the ATPase alpha/beta chains family. In terms of assembly, F-type ATPases have 2 components, CF(1) - the catalytic core - and CF(0) - the membrane proton channel. CF(1) has five subunits: alpha(3), beta(3), gamma(1), delta(1), epsilon(1). CF(0) has four main subunits: a(1), b(1), b'(1) and c(9-12).

The protein localises to the plastid. It is found in the chloroplast thylakoid membrane. It catalyses the reaction ATP + H2O + 4 H(+)(in) = ADP + phosphate + 5 H(+)(out). Its function is as follows. Produces ATP from ADP in the presence of a proton gradient across the membrane. The catalytic sites are hosted primarily by the beta subunits. The protein is ATP synthase subunit beta, chloroplastic of Hyacinthoides non-scripta (English bluebell).